Reading from the N-terminus, the 177-residue chain is Dihydrofolate reductase (177 aa).

The enzyme catalyses (6S)-5,6,7,8-tetrahydrofolate + NADP(+) = 7,8-dihydrofolate + NADPH + H(+). Functionally, provides the tetrahydrofolates necessary for the synthesis of nucleotides and amino acids. Bacteriophage T5 induces high levels of dihydrofolate reductase in the host cell, probably for the viral replication. This chain is Dihydrofolate reductase, found in Escherichia phage T5 (Enterobacteria phage T5).